Reading from the N-terminus, the 1415-residue chain is Non-structural polyprotein 1AB (1415 aa).

Residues 104-142 are a coiled coil; it reads KLIHKANALQERLRLSQEEKATLALDVQFLQHENVRLKE. 5 helical membrane passes run 154-174, 239-259, 286-306, 313-333, and 344-364; these read MKWI…GGYA, VFYY…LAIG, VLPT…TLMV, LLAI…LCFM, and GLIA…LTGT. Residues H461, D489, and S551 each act as charge relay system; for serine protease activity in the active site. The stretch at 587 to 616 forms a coiled coil; the sequence is VKAPSRVELLKEEIERLKAQLNSAAENPAT. Y693 is subject to O-(5'-phospho-RNA)-tyrosine. A disordered region spans residues 753-813; the sequence is FDQAKPTPAP…KNEPQPYSQT (61 aa). Residues 783 to 795 are compositionally biased toward basic and acidic residues; the sequence is SQKKEKQLEHEQQ. Positions 800–813 are enriched in polar residues; the sequence is TKPQKNEPQPYSQT. The RdRp catalytic domain occupies 1160–1286; the sequence is KHFIEFDWTR…TTPSVPDDYE (127 aa).

This sequence belongs to the astroviridae polyprotein 1AB family. In terms of assembly, monomer. Cleaved by the viral and host proteases. The protease is probably autocatalytically cleaved.

Its subcellular location is the host membrane. It catalyses the reaction RNA(n) + a ribonucleoside 5'-triphosphate = RNA(n+1) + diphosphate. Its function is as follows. Responsible for the cleavage of the polyprotein into functional products. Covalently attached to the 5' extremity of the genomic and subgenomic RNAs. It may serve as a primer for the replicase. This is Non-structural polyprotein 1AB (ORF1) from Human astrovirus-4 (HAstV-4).